A 188-amino-acid polypeptide reads, in one-letter code: Elongation factor P (188 aa).

Lysine 34 is modified (N6-(3,6-diaminohexanoyl)-5-hydroxylysine).

The protein belongs to the elongation factor P family. May be beta-lysylated on the epsilon-amino group of Lys-34 by the combined action of EpmA and EpmB, and then hydroxylated on the C5 position of the same residue by EpmC (if this protein is present). Lysylation is critical for the stimulatory effect of EF-P on peptide-bond formation. The lysylation moiety may extend toward the peptidyltransferase center and stabilize the terminal 3-CCA end of the tRNA. Hydroxylation of the C5 position on Lys-34 may allow additional potential stabilizing hydrogen-bond interactions with the P-tRNA.

It localises to the cytoplasm. It functions in the pathway protein biosynthesis; polypeptide chain elongation. Functionally, involved in peptide bond synthesis. Alleviates ribosome stalling that occurs when 3 or more consecutive Pro residues or the sequence PPG is present in a protein, possibly by augmenting the peptidyl transferase activity of the ribosome. Modification of Lys-34 is required for alleviation. In Pectobacterium atrosepticum (strain SCRI 1043 / ATCC BAA-672) (Erwinia carotovora subsp. atroseptica), this protein is Elongation factor P.